The sequence spans 614 residues: Glucose oxidase 1 (614 aa).

The first 15 residues, Met1–Ala15, serve as a signal peptide directing secretion. 3 residues coordinate FAD: Leu52, Thr53, and Glu73. Asn112 is a glycosylation site (N-linked (GlcNAc...) asparagine). Positions Ile117–Arg136 are disordered. Ser126, Asn130, Gly131, and Ser133 together coordinate FAD. Residues Asn184 and Asn191 are each glycosylated (N-linked (GlcNAc...) asparagine). Residues Cys187 and Cys229 are joined by a disulfide bond. Residue Val273 participates in FAD binding. 3 N-linked (GlcNAc...) asparagine glycosylation sites follow: Asn279, Asn383, and Asn416. His544 (proton acceptor) is an active-site residue. The O2 site is built by Arg565 and Val566. FAD is bound by residues Gly577 and Met589.

It belongs to the GMC oxidoreductase family. In terms of assembly, homodimer. It depends on FAD as a cofactor.

It is found in the secreted. The protein localises to the cell wall. Its subcellular location is the cytoplasm. It localises to the extracellular space. The protein resides in the extracellular matrix. It carries out the reaction beta-D-glucose + O2 = D-glucono-1,5-lactone + H2O2. In terms of biological role, glucose oxidase catalyzes the oxidation of beta-D-glucose to D-glucono-delta-lactone and hydrogen peroxide in the presence of molecular oxygen. The protein is Glucose oxidase 1 of Penicillium expansum (Blue mold rot fungus).